We begin with the raw amino-acid sequence, 188 residues long: MATLNPLSWVTWLAENEDKLRPPVNNYCLYQGNDFILMAVGGPNERNDYHVNETEVRLQWHQPSETNEQEWFYQVQGDMLLRVIENDTFRDIPIKEGEMFLLPGNTPHNPVRYKDTIGLVMERQRPAESRDRLRWYCTKGNHCSPTIIREEVFHCADLGSQLKPIIERWQQDEESRRCGECGCIADPK.

Residue Arg46 coordinates O2. The Fe cation site is built by His50, Glu70, and His108. Residue Glu70 coordinates substrate. Substrate contacts are provided by Arg112 and Glu122.

Belongs to the 3-HAO family. The cofactor is Fe(2+).

The protein localises to the cytoplasm. The catalysed reaction is 3-hydroxyanthranilate + O2 = (2Z,4Z)-2-amino-3-carboxymuconate 6-semialdehyde. Its pathway is cofactor biosynthesis; NAD(+) biosynthesis; quinolinate from L-kynurenine: step 3/3. Catalyzes the oxidative ring opening of 3-hydroxyanthranilate to 2-amino-3-carboxymuconate semialdehyde, which spontaneously cyclizes to quinolinate. The sequence is that of 3-hydroxyanthranilate 3,4-dioxygenase 2 (bna1-2) from Aspergillus fumigatus (strain CBS 144.89 / FGSC A1163 / CEA10) (Neosartorya fumigata).